A 461-amino-acid chain; its full sequence is GTPase Der (461 aa).

EngA-type G domains follow at residues 3–167 and 190–371; these read PQVI…GEKQ and LKLA…AAWS. Residues 9-16, 56-60, 119-122, 196-203, 249-253, and 314-317 each bind GTP; these read GRPNVGKS, DTAGW, NKAE, GRPNAGKS, DTAGM, and NKWD. One can recognise a KH-like domain in the interval 372-456; it reads KRVPTAALNR…PIRLTLRSPK (85 aa).

It belongs to the TRAFAC class TrmE-Era-EngA-EngB-Septin-like GTPase superfamily. EngA (Der) GTPase family. Associates with the 50S ribosomal subunit.

In terms of biological role, GTPase that plays an essential role in the late steps of ribosome biogenesis. This chain is GTPase Der, found in Novosphingobium aromaticivorans (strain ATCC 700278 / DSM 12444 / CCUG 56034 / CIP 105152 / NBRC 16084 / F199).